A 740-amino-acid chain; its full sequence is MSQPVENLDEVLKNHKLSKEEYEDILRILDGRHPNIVEIGIFSAMWSEHCSYKSSKKYLNGFPTKAPWVIQGPGENAGVIDIGDGMAAVFKMESHNHPSFIEPFQGAATGVGGILRDIFTMGARPVANLNALRFGRVRGDSDINKYQRHLVRGVVDGIGSYGNCMGVPTIGGEVSFDESYNGNILVNAFSLGLVKSDEIFLGVASGIGNPVMYVGSKTGRDGLGGAVMSSDSFTEESKSLRPTVQVGDPFTEKLLLEACLELFKTDAIIGIQDMGAAGLTSSAFEMAGKTGAGLIMHLDKVPAREEGMTPYDFMLSESQERMLICAKKGREQEIIDIFEKWELDVAVIGEVTDTERMELFWYGDKVCDMPIAPVSEEAPILDRPVARPAYLNEVIAKTVDDYAKVDDQEAYEKLLAPLEVVDKAWVYNQYDSMVQTNTTKHPGSLDASCIRIKENGRALAMSSDCNPRYCYIDPKGGAALAVVESGRNVAMSGARPLSITDCLNYGNPENPEVMWQFAQGCEGIKEACLELNTPVVSGNVSLYNETNGVSVFPTPAIAMVGLNDDQNKVLPSVFQHEGNNIVLIGETKGEFGGSLYIKELFGETVGTLPSFDYKTELKLWELVIEANKIGLLESAKDVNVGGIAIALSKMAAVSSKGITVKASVSNSRDIFDESQSRALLEVADADLEELLDMAAGLGLKAEVIGKIGGEEVKVNDVALPLEKVKDVYFNTFKRTIEQDL.

Residue H49 is part of the active site. 2 residues coordinate ATP: Y52 and K91. E93 is a binding site for Mg(2+). Substrate-binding positions include 94–97 (SHNH) and R116. H95 (proton acceptor) is an active-site residue. Mg(2+) is bound at residue D117. Q245 is a substrate binding site. D273 contacts Mg(2+). Substrate is bound at residue 317 to 319 (ESQ). ATP-binding residues include D501 and G538. N539 lines the Mg(2+) pocket. A substrate-binding site is contributed by S541.

It belongs to the FGAMS family. In terms of assembly, monomer. Part of the FGAM synthase complex composed of 1 PurL, 1 PurQ and 2 PurS subunits.

It localises to the cytoplasm. It catalyses the reaction N(2)-formyl-N(1)-(5-phospho-beta-D-ribosyl)glycinamide + L-glutamine + ATP + H2O = 2-formamido-N(1)-(5-O-phospho-beta-D-ribosyl)acetamidine + L-glutamate + ADP + phosphate + H(+). It participates in purine metabolism; IMP biosynthesis via de novo pathway; 5-amino-1-(5-phospho-D-ribosyl)imidazole from N(2)-formyl-N(1)-(5-phospho-D-ribosyl)glycinamide: step 1/2. Functionally, part of the phosphoribosylformylglycinamidine synthase complex involved in the purines biosynthetic pathway. Catalyzes the ATP-dependent conversion of formylglycinamide ribonucleotide (FGAR) and glutamine to yield formylglycinamidine ribonucleotide (FGAM) and glutamate. The FGAM synthase complex is composed of three subunits. PurQ produces an ammonia molecule by converting glutamine to glutamate. PurL transfers the ammonia molecule to FGAR to form FGAM in an ATP-dependent manner. PurS interacts with PurQ and PurL and is thought to assist in the transfer of the ammonia molecule from PurQ to PurL. The sequence is that of Phosphoribosylformylglycinamidine synthase subunit PurL from Sulfurovum sp. (strain NBC37-1).